The primary structure comprises 614 residues: Threonine--tRNA ligase (614 aa).

The tract at residues 1–141 (MRLLLIHSDY…LSKTIVPGEE (141 aa)) is editing domain. The catalytic stretch occupies residues 198-490 (AHVDLMRSKE…ISTQKVPALP (293 aa)). Residues Cys-290, His-342, and His-463 each coordinate Zn(2+).

This sequence belongs to the class-II aminoacyl-tRNA synthetase family. Homodimer. It depends on Zn(2+) as a cofactor.

It localises to the cytoplasm. The enzyme catalyses tRNA(Thr) + L-threonine + ATP = L-threonyl-tRNA(Thr) + AMP + diphosphate + H(+). In terms of biological role, catalyzes the attachment of threonine to tRNA(Thr) in a two-step reaction: L-threonine is first activated by ATP to form Thr-AMP and then transferred to the acceptor end of tRNA(Thr). Also edits incorrectly charged L-seryl-tRNA(Thr). The protein is Threonine--tRNA ligase of Methanoregula boonei (strain DSM 21154 / JCM 14090 / 6A8).